We begin with the raw amino-acid sequence, 421 residues long: Histidine--tRNA ligase (421 aa).

Belongs to the class-II aminoacyl-tRNA synthetase family. Homodimer.

The protein localises to the cytoplasm. It carries out the reaction tRNA(His) + L-histidine + ATP = L-histidyl-tRNA(His) + AMP + diphosphate + H(+). The polypeptide is Histidine--tRNA ligase (Coxiella burnetii (strain CbuK_Q154) (Coxiella burnetii (strain Q154))).